The sequence spans 282 residues: 3-hydroxyanthranilate 3,4-dioxygenase (282 aa).

Residues 1 to 160 (MAMAINVKKW…SKQYKSGKPD (160 aa)) are domain A (catalytic). Arginine 43 contributes to the O2 binding site. Residues histidine 47, glutamate 53, and histidine 91 each coordinate Fe cation. Glutamate 53 contacts substrate. Substrate is bound by residues arginine 95 and glutamate 105. The segment at 161–177 (PDQPKAKMPFCLSTEQV) is linker. Residues 178–282 (MEPFSFQHWL…LSTSQVPLPM (105 aa)) are domain B.

This sequence belongs to the 3-HAO family. In terms of assembly, monomer. It depends on Fe(2+) as a cofactor.

Its subcellular location is the cytoplasm. It localises to the cytosol. The catalysed reaction is 3-hydroxyanthranilate + O2 = (2Z,4Z)-2-amino-3-carboxymuconate 6-semialdehyde. Its pathway is cofactor biosynthesis; NAD(+) biosynthesis; quinolinate from L-kynurenine: step 3/3. Catalyzes the oxidative ring opening of 3-hydroxyanthranilate to 2-amino-3-carboxymuconate semialdehyde, which spontaneously cyclizes to quinolinate. This is 3-hydroxyanthranilate 3,4-dioxygenase (haao) from Xenopus laevis (African clawed frog).